The chain runs to 169 residues: tRNA (cytidine(56)-2'-O)-methyltransferase (169 aa).

Residues L77, 103–107 (GSEKV), and 121–128 (IGNQPHSE) contribute to the S-adenosyl-L-methionine site.

It belongs to the aTrm56 family. As to quaternary structure, homodimer.

Its subcellular location is the cytoplasm. It carries out the reaction cytidine(56) in tRNA + S-adenosyl-L-methionine = 2'-O-methylcytidine(56) in tRNA + S-adenosyl-L-homocysteine + H(+). Its function is as follows. Specifically catalyzes the AdoMet-dependent 2'-O-ribose methylation of cytidine at position 56 in tRNAs. The chain is tRNA (cytidine(56)-2'-O)-methyltransferase from Sulfurisphaera tokodaii (strain DSM 16993 / JCM 10545 / NBRC 100140 / 7) (Sulfolobus tokodaii).